Here is a 95-residue protein sequence, read N- to C-terminus: F(1)-ATPase inhibitor IF(1), mitochondrial (95 aa).

The N-terminal 25 residues, 1 to 25 (MLRTTVSKLARPTVSRAFATTSRAL), are a transit peptide targeting the mitochondrion. 2 disordered regions span residues 20-48 (TTSR…REKA) and 76-95 (LKTL…GERN).

Belongs to the ATPase inhibitor family. As to quaternary structure, associates with the mitochondrial small ribosomal subunit (mt-SSU). IF(1) coiled-coil forms a helical bundle with the C-terminal extension of uS17m and also binds to mS27 in the mtSSU tail. Since the C-terminal extension of uS17m stabilizing the IF(1) on the mt-SSU is specific to N.crassa, IF(1) binding might also be specific.

It localises to the mitochondrion. Endogenous F(1)F(0)-ATPase inhibitor limiting ATP depletion when the mitochondrial membrane potential falls below a threshold and the F(1)F(0)-ATP synthase starts hydrolyzing ATP to pump protons out of the mitochondrial matrix. Required to avoid the consumption of cellular ATP when the F(1)F(0)-ATP synthase enzyme acts as an ATP hydrolase. Functions through inserting its N-terminal part into the catalytically active F1-ATPase, thereby blocking its rotational movement and subsequently the ATP hydrolase activity. In Neurospora crassa (strain ATCC 24698 / 74-OR23-1A / CBS 708.71 / DSM 1257 / FGSC 987), this protein is F(1)-ATPase inhibitor IF(1), mitochondrial (inh1).